We begin with the raw amino-acid sequence, 433 residues long: Serine hydroxymethyltransferase (433 aa).

Residues L132 and 136–138 contribute to the (6S)-5,6,7,8-tetrahydrofolate site; that span reads GHL. Position 241 is an N6-(pyridoxal phosphate)lysine (K241).

Belongs to the SHMT family. Homodimer. Pyridoxal 5'-phosphate is required as a cofactor.

The protein resides in the cytoplasm. The enzyme catalyses (6R)-5,10-methylene-5,6,7,8-tetrahydrofolate + glycine + H2O = (6S)-5,6,7,8-tetrahydrofolate + L-serine. Its pathway is one-carbon metabolism; tetrahydrofolate interconversion. The protein operates within amino-acid biosynthesis; glycine biosynthesis; glycine from L-serine: step 1/1. Its function is as follows. Catalyzes the reversible interconversion of serine and glycine with tetrahydrofolate (THF) serving as the one-carbon carrier. This reaction serves as the major source of one-carbon groups required for the biosynthesis of purines, thymidylate, methionine, and other important biomolecules. Also exhibits THF-independent aldolase activity toward beta-hydroxyamino acids, producing glycine and aldehydes, via a retro-aldol mechanism. This Rhodopseudomonas palustris (strain BisA53) protein is Serine hydroxymethyltransferase.